The primary structure comprises 315 residues: tRNA-cytidine(32) 2-sulfurtransferase (315 aa).

A PP-loop motif motif is present at residues 39-44; sequence SGGKDS. 3 residues coordinate [4Fe-4S] cluster: cysteine 114, cysteine 117, and cysteine 205.

Belongs to the TtcA family. In terms of assembly, homodimer. Mg(2+) serves as cofactor. It depends on [4Fe-4S] cluster as a cofactor.

The protein localises to the cytoplasm. It catalyses the reaction cytidine(32) in tRNA + S-sulfanyl-L-cysteinyl-[cysteine desulfurase] + AH2 + ATP = 2-thiocytidine(32) in tRNA + L-cysteinyl-[cysteine desulfurase] + A + AMP + diphosphate + H(+). Its pathway is tRNA modification. Functionally, catalyzes the ATP-dependent 2-thiolation of cytidine in position 32 of tRNA, to form 2-thiocytidine (s(2)C32). The sulfur atoms are provided by the cysteine/cysteine desulfurase (IscS) system. This chain is tRNA-cytidine(32) 2-sulfurtransferase, found in Ralstonia pickettii (strain 12J).